Consider the following 171-residue polypeptide: MAILKWKLSRWHTSDQISTTETADPKTTEATNNESTQGTKRRRLDLPDSRDNTQYSTKYTDCAVDSRPRGGGLHSTTNCTYKGRNVCSSKVSPIVHLKGDPNSLKCLRYRLKPFKDLYCNMSSTWHWTSDDKGDKVGIVTVTYTTETQRQLFLNTVKIPPTVQISTGVMSL.

Residues 15-54 (DQISTTETADPKTTEATNNESTQGTKRRRLDLPDSRDNTQ) are disordered. Over residues 28–38 (TEATNNESTQG) the composition is skewed to polar residues.

This sequence belongs to the papillomaviridae E8^E2C protein family.

It localises to the host nucleus. In terms of biological role, plays a role in limiting the replication of viral DNA in keratinocytes. Recruits the host NCoR/SMRT complex to viral replication foci to mediate repression of both viral replication and transcription. The sequence is that of Protein E8^E2C from Homo sapiens (Human).